Consider the following 356-residue polypeptide: Methylthioribose-1-phosphate isomerase (356 aa).

Catalysis depends on aspartate 234, which acts as the Proton donor.

Belongs to the eIF-2B alpha/beta/delta subunits family. MtnA subfamily.

The protein localises to the cytoplasm. It is found in the nucleus. The catalysed reaction is 5-(methylsulfanyl)-alpha-D-ribose 1-phosphate = 5-(methylsulfanyl)-D-ribulose 1-phosphate. Its pathway is amino-acid biosynthesis; L-methionine biosynthesis via salvage pathway; L-methionine from S-methyl-5-thio-alpha-D-ribose 1-phosphate: step 1/6. Functionally, catalyzes the interconversion of methylthioribose-1-phosphate (MTR-1-P) into methylthioribulose-1-phosphate (MTRu-1-P). This Schizosaccharomyces japonicus (strain yFS275 / FY16936) (Fission yeast) protein is Methylthioribose-1-phosphate isomerase (mri1).